The following is a 149-amino-acid chain: Large ribosomal subunit protein bL9 (149 aa).

Lys89 carries the N6-acetyllysine modification.

It belongs to the bacterial ribosomal protein bL9 family.

Its function is as follows. Binds to the 23S rRNA. This Shigella boydii serotype 18 (strain CDC 3083-94 / BS512) protein is Large ribosomal subunit protein bL9.